A 341-amino-acid chain; its full sequence is Holliday junction branch migration complex subunit RuvB (341 aa).

Residues methionine 1 to tyrosine 182 form a large ATPase domain (RuvB-L) region. Residues leucine 21, arginine 22, glycine 63, lysine 66, threonine 67, threonine 68, glutamate 129–phenylalanine 131, arginine 172, tyrosine 182, and arginine 219 each bind ATP. A Mg(2+)-binding site is contributed by threonine 67. The tract at residues threonine 183–glycine 253 is small ATPAse domain (RuvB-S). Residues glutamine 256–glycine 341 are head domain (RuvB-H). The DNA site is built by arginine 292, arginine 311, and arginine 316.

The protein belongs to the RuvB family. In terms of assembly, homohexamer. Forms an RuvA(8)-RuvB(12)-Holliday junction (HJ) complex. HJ DNA is sandwiched between 2 RuvA tetramers; dsDNA enters through RuvA and exits via RuvB. An RuvB hexamer assembles on each DNA strand where it exits the tetramer. Each RuvB hexamer is contacted by two RuvA subunits (via domain III) on 2 adjacent RuvB subunits; this complex drives branch migration. In the full resolvosome a probable DNA-RuvA(4)-RuvB(12)-RuvC(2) complex forms which resolves the HJ.

It localises to the cytoplasm. It carries out the reaction ATP + H2O = ADP + phosphate + H(+). The RuvA-RuvB-RuvC complex processes Holliday junction (HJ) DNA during genetic recombination and DNA repair, while the RuvA-RuvB complex plays an important role in the rescue of blocked DNA replication forks via replication fork reversal (RFR). RuvA specifically binds to HJ cruciform DNA, conferring on it an open structure. The RuvB hexamer acts as an ATP-dependent pump, pulling dsDNA into and through the RuvAB complex. RuvB forms 2 homohexamers on either side of HJ DNA bound by 1 or 2 RuvA tetramers; 4 subunits per hexamer contact DNA at a time. Coordinated motions by a converter formed by DNA-disengaged RuvB subunits stimulates ATP hydrolysis and nucleotide exchange. Immobilization of the converter enables RuvB to convert the ATP-contained energy into a lever motion, pulling 2 nucleotides of DNA out of the RuvA tetramer per ATP hydrolyzed, thus driving DNA branch migration. The RuvB motors rotate together with the DNA substrate, which together with the progressing nucleotide cycle form the mechanistic basis for DNA recombination by continuous HJ branch migration. Branch migration allows RuvC to scan DNA until it finds its consensus sequence, where it cleaves and resolves cruciform DNA. This chain is Holliday junction branch migration complex subunit RuvB, found in Ruegeria pomeroyi (strain ATCC 700808 / DSM 15171 / DSS-3) (Silicibacter pomeroyi).